Reading from the N-terminus, the 272-residue chain is tRNA pseudouridine synthase A (272 aa).

Aspartate 51 (nucleophile) is an active-site residue. Tyrosine 109 contacts substrate.

Belongs to the tRNA pseudouridine synthase TruA family. Homodimer.

The enzyme catalyses uridine(38/39/40) in tRNA = pseudouridine(38/39/40) in tRNA. Functionally, formation of pseudouridine at positions 38, 39 and 40 in the anticodon stem and loop of transfer RNAs. The chain is tRNA pseudouridine synthase A from Verminephrobacter eiseniae (strain EF01-2).